The sequence spans 358 residues: DnaJ homolog subfamily C member 18 (358 aa).

In terms of domain architecture, J spans 82–146 (NYYEILGVSR…DKRLRYDEYG (65 aa)). Residues 228 to 248 (AFIQLLPVLVIVIISVITQLL) form a helical membrane-spanning segment.

The protein resides in the endoplasmic reticulum membrane. The polypeptide is DnaJ homolog subfamily C member 18 (DNAJC18) (Bos taurus (Bovine)).